The following is a 250-amino-acid chain: uncharacterized protein (250 aa).

Residues 165–208 (HLNLETANTKATEYQKNYQEELKQRQELRQKLLQERTQKMLEAL) are a coiled coil. Basic and acidic residues predominate over residues 201–233 (TQKMLEALHQEETPEQDARDTAKKKTDQEEHTM). Residues 201 to 250 (TQKMLEALHQEETPEQDARDTAKKKTDQEEHTMRKANAPKTKASGEAPTP) are disordered.

This is an uncharacterized protein from Treponema pallidum (strain Nichols).